A 266-amino-acid polypeptide reads, in one-letter code: Ras-like protein family member 12 (266 aa).

GTP-binding positions include 27–34 (GRRGAGKS), 74–78 (DTADL), and 134–137 (NKLD).

It belongs to the small GTPase superfamily. Ras family.

It carries out the reaction GTP + H2O = GDP + phosphate + H(+). The polypeptide is Ras-like protein family member 12 (RASL12) (Homo sapiens (Human)).